A 382-amino-acid polypeptide reads, in one-letter code: Glutamyl-tRNA reductase (382 aa).

Residues 38-41 (TCNR), serine 85, 90-92 (ENQ), and glutamine 96 contribute to the substrate site. Residue cysteine 39 is the Nucleophile of the active site. 164 to 169 (GAGEIG) serves as a coordination point for NADP(+).

Belongs to the glutamyl-tRNA reductase family. Homodimer.

It carries out the reaction (S)-4-amino-5-oxopentanoate + tRNA(Glu) + NADP(+) = L-glutamyl-tRNA(Glu) + NADPH + H(+). Its pathway is porphyrin-containing compound metabolism; protoporphyrin-IX biosynthesis; 5-aminolevulinate from L-glutamyl-tRNA(Glu): step 1/2. Catalyzes the NADPH-dependent reduction of glutamyl-tRNA(Glu) to glutamate 1-semialdehyde (GSA). The protein is Glutamyl-tRNA reductase of Methanococcus maripaludis (strain C7 / ATCC BAA-1331).